The following is a 352-amino-acid chain: MKSLVLLLCFAQLWSCQSAPQGAGLGFRELACDDPETEHVALIAVDYLNKHLLQGFRQILNQIDKVKVWSRRPFGEVYELEIDTLETTCHALDPTPLANCSVRQQAEHAVEGDCDFHILKQDGQFRVLHAQCHSTPDSAEDVRKFCPRCPILIRFNDTNVVHTVKTALAAFNAQNNGTYFKLVEISRAQNVPFPVSTLVEFVIAATDCTGQEVTDPAKCNLLAEKQYGFCKATLIHRLGGEEVSVACKLFQTQPQPANANPAGPAPTVGQAAPVAPPAGPPESVVVGPVAVPLGLPDHRTHHDLRHAFSPVASVESASGEVLHSPKVGQPGDAGAAGPVAPLCPGRVRYFKI.

The signal sequence occupies residues 1 to 18 (MKSLVLLLCFAQLWSCQS). The 115-residue stretch at 19–133 (APQGAGLGFR…QFRVLHAQCH (115 aa)) folds into the Cystatin fetuin-A-type 1 domain. Intrachain disulfides connect C32-C343, C89-C100, C114-C132, C146-C149, C208-C219, and C230-C247. N99 carries an N-linked (GlcNAc...) asparagine glycan. At S134 the chain carries Phosphoserine. Residue T135 is modified to Phosphothreonine. S138 carries the phosphoserine modification. In terms of domain architecture, Cystatin fetuin-A-type 2 spans 144-250 (KFCPRCPILI…EEVSVACKLF (107 aa)). Residues N156 and N176 are each glycosylated (N-linked (GlcNAc...) asparagine). Positions 256-273 (PANANPAGPAPTVGQAAP) are enriched in low complexity. The tract at residues 256–280 (PANANPAGPAPTVGQAAPVAPPAGP) is disordered. 4 positions are modified to phosphoserine: S309, S313, S316, and S318. The tract at residues 319 to 338 (GEVLHSPKVGQPGDAGAAGP) is disordered. A compositionally biased stretch (low complexity) spans 328-338 (GQPGDAGAAGP).

Belongs to the fetuin family. Post-translationally, undergoes complex post-translational modification involving N-glycosylation, and addition of fucose and sialic acid residues. Phosphorylation occurs at a serine residue. In terms of processing, phosphorylated by FAM20C in the extracellular medium. As to expression, synthesized in liver and secreted by the hepatocytes in the blood.

It localises to the secreted. Could inhibit both insulin-receptor tyrosine kinase activity and insulin-stimulated receptor autophosphorylation and, concomitantly, antagonize the mitogenic effect of the hormone in cultured rat hepatoma cells. This chain is Alpha-2-HS-glycoprotein (Ahsg), found in Rattus norvegicus (Rat).